A 58-amino-acid chain; its full sequence is Large ribosomal subunit protein eL37 (58 aa).

Over residues 1-17 (MTGAGTPSQGKKNTTTH) the composition is skewed to polar residues. Residues 1 to 26 (MTGAGTPSQGKKNTTTHTKCRRCGEK) form a disordered region. 4 residues coordinate Zn(2+): C20, C23, C35, and C38. The segment at 20 to 38 (CRRCGEKSYHTKKKVCSSC) adopts a C4-type zinc-finger fold.

Belongs to the eukaryotic ribosomal protein eL37 family. Zn(2+) serves as cofactor.

Functionally, binds to the 23S rRNA. This Halobacterium salinarum (strain ATCC 29341 / DSM 671 / R1) protein is Large ribosomal subunit protein eL37.